A 529-amino-acid polypeptide reads, in one-letter code: Beta-hexosaminidase subunit alpha (529 aa).

The first 22 residues, 1 to 22, serve as a signal peptide directing secretion; it reads MAGSTLRFSLLLAAAFAGRATA. The propeptide occupies 23 to 88; the sequence is LWPWPQYIQT…RFPHPIEKRH (66 aa). Cys58 and Cys104 are disulfide-bonded. N-linked (GlcNAc...) asparagine glycosylation is found at Asn115, Asn157, and Asn295. A disulfide bridge links Cys277 with Cys328. Glu323 acts as the Proton donor in catalysis. The critical for hydrolysis GM2 gangliosides stretch occupies residues 423–424; it reads NH. Cys505 and Cys522 are joined by a disulfide.

The protein belongs to the glycosyl hydrolase 20 family. There are 3 beta-hexosaminidase isozymes: isozyme A (hexosaminidase A) is a heterodimer composed of one subunit alpha and one subunit beta (chain A and B); isozyme B (hexosaminidase B) is a homodimer of two beta subunits (two chains A and B); isozyme S (hexosaminidase S) is a homodimer of two alpha subunits. The composition of the dimer (isozyme A versus isozyme S) has a significant effect on the substrate specificity of the alpha subunit active site.

The protein localises to the lysosome. The catalysed reaction is Hydrolysis of terminal non-reducing N-acetyl-D-hexosamine residues in N-acetyl-beta-D-hexosaminides.. It catalyses the reaction N-acetyl-beta-D-galactosaminyl-(1-&gt;4)-beta-D-3-sulfogalactosyl-(1-&gt;4)-beta-D-glucosyl-(1&lt;-&gt;1')-ceramide + H2O = a beta-D-3-sulfogalactosyl-(1-&gt;4)-beta-D-glucosyl-(1&lt;-&gt;1')-ceramide + N-acetyl-beta-D-galactosamine. It carries out the reaction a ganglioside GM2 (d18:1(4E)) + H2O = a ganglioside GM3 (d18:1(4E)) + N-acetyl-beta-D-galactosamine. The enzyme catalyses a ganglioside GM2 + H2O = a ganglioside GM3 + N-acetyl-beta-D-galactosamine. The catalysed reaction is beta-D-GalNAc-(1-&gt;4)-alpha-L-IdoA-(1-&gt;3)-beta-D-GalNAc-4-sulfate-(1-&gt;4)-alpha-L-IdoA-(1-&gt;3)-D-GalNAc-4-sulfate + H2O = alpha-L-IdoA-(1-&gt;3)-beta-D-GalNAc-4-sulfate-(1-&gt;4)-alpha-L-IdoA-(1-&gt;3)-D-GalNAc-4-sulfate + N-acetyl-D-galactosamine. It catalyses the reaction N-acetyl-beta-D-6-sulfogalactosaminyl-(1-&gt;4)-alpha-L-iduronyl-(1-&gt;3)-N-acetyl-D-6-sulfogalactosamine + H2O = alpha-L-iduronyl-(1-&gt;3)-N-acetyl-D-6-sulfogalactosamine + N-acetyl-D-6-sulfogalactosamine. With respect to regulation, addition of GM2A stimulates the hydrolysis of sulfated glycosphingolipid SM2 and the ganglioside GM2. In terms of biological role, hydrolyzes the non-reducing end N-acetyl-D-hexosamine and/or sulfated N-acetyl-D-hexosamine of glycoconjugates, such as the oligosaccharide moieties from proteins and neutral glycolipids, or from certain mucopolysaccharides. The isozyme S is as active as the isozyme A on the anionic bis-sulfated glycans, the chondroitin-6-sulfate trisaccharide (C6S-3), and the dermatan sulfate pentasaccharide, and the sulfated glycosphingolipid SM2. The isozyme B does not hydrolyze each of these substrates, however hydrolyzes efficiently neutral oligosaccharide. Only the isozyme A is responsible for the degradation of GM2 gangliosides in the presence of GM2A. In Bos taurus (Bovine), this protein is Beta-hexosaminidase subunit alpha.